Consider the following 289-residue polypeptide: Protease HtpX (289 aa).

Transmembrane regions (helical) follow at residues 4–24 (IMLF…VLNI) and 36–56 (LSGL…ISLM). H143 serves as a coordination point for Zn(2+). E144 is a catalytic residue. Residue H147 participates in Zn(2+) binding. Transmembrane regions (helical) follow at residues 158-178 (LMQG…ANIV) and 192-212 (MVYF…ASFL). E221 serves as a coordination point for Zn(2+).

Belongs to the peptidase M48B family. Zn(2+) is required as a cofactor.

It is found in the cell inner membrane. This is Protease HtpX from Vibrio campbellii (strain ATCC BAA-1116).